The sequence spans 640 residues: Threonine--tRNA ligase (640 aa).

The 61-residue stretch at 1 to 61 folds into the TGS domain; sequence MPVITLPDGS…SNDATLQIIT (61 aa). Residues 242-533 are catalytic; that stretch reads DHRKIGKQLD…LIEHYAGVFP (292 aa). Positions 333, 384, and 510 each coordinate Zn(2+).

The protein belongs to the class-II aminoacyl-tRNA synthetase family. In terms of assembly, homodimer. Zn(2+) is required as a cofactor.

It localises to the cytoplasm. It carries out the reaction tRNA(Thr) + L-threonine + ATP = L-threonyl-tRNA(Thr) + AMP + diphosphate + H(+). Functionally, catalyzes the attachment of threonine to tRNA(Thr) in a two-step reaction: L-threonine is first activated by ATP to form Thr-AMP and then transferred to the acceptor end of tRNA(Thr). Also edits incorrectly charged L-seryl-tRNA(Thr). The chain is Threonine--tRNA ligase from Pseudomonas putida (strain ATCC 700007 / DSM 6899 / JCM 31910 / BCRC 17059 / LMG 24140 / F1).